The chain runs to 802 residues: Pyrophosphate-energized membrane proton pump 2 (802 aa).

Transmembrane regions (helical) follow at residues 45–65, 66–86, 118–138, 160–180, 206–226, and 246–266; these read VLSI…ASTS, PIIV…IYLT, YSTI…IYLF, VAAF…GMWV, AGGF…AILY, and LPLL…FAQL. Residue K273 participates in substrate binding. The Mg(2+) site is built by D276, D280, and D306. The next 5 helical transmembrane spans lie at 348 to 368, 386 to 406, 421 to 441, 468 to 488, and 511 to 531; these read FILF…IGIL, MAVL…TFGA, WFNF…FVWI, IIAG…TISV, and GGLF…AYVL. Mg(2+)-binding residues include D541 and N568. The next 4 membrane-spanning stretches (helical) occupy residues 577 to 597, 615 to 635, 686 to 706, and 716 to 736; these read FAIG…MDEV, VFVG…WACA, GALA…LGYY, and VVAS…LFLN. Residues D743 and D773 each contribute to the Mg(2+) site. Residue K776 participates in substrate binding. The helical transmembrane segment at 782-802 threads the bilayer; that stretch reads SIHVLIKMLATITLVMAPVFL.

Belongs to the H(+)-translocating pyrophosphatase (TC 3.A.10) family. K(+)-insensitive subfamily. As to quaternary structure, monomer. As to expression, ubiquitous. Mostly expressed in cotyledons, roots and flowers. Especially high levels in trichomes, sepals and stamen filaments.

The protein resides in the golgi apparatus membrane. The enzyme catalyses diphosphate + H2O + H(+)(in) = 2 phosphate + 2 H(+)(out). With respect to regulation, activated by Mg(+) but not by K(+). Inhibited by Ca(2+). Its function is as follows. Pyrophosphatase active in both inorganic pyrophosphate hydrolysis and H(+) translocation. This Arabidopsis thaliana (Mouse-ear cress) protein is Pyrophosphate-energized membrane proton pump 2 (AVPL1).